The chain runs to 556 residues: Glutamine--tRNA ligase (556 aa).

Residues 34–44 (PEPNGYLHIGH) carry the 'HIGH' region motif. ATP-binding positions include 35 to 37 (EPN) and 41 to 47 (HIGHAKS). Aspartate 67 and tyrosine 212 together coordinate L-glutamine. ATP is bound by residues threonine 231, 261 to 262 (RL), and 269 to 271 (MSK). The 'KMSKS' region motif lies at 268–272 (IMSKR).

It belongs to the class-I aminoacyl-tRNA synthetase family. Monomer.

It localises to the cytoplasm. The catalysed reaction is tRNA(Gln) + L-glutamine + ATP = L-glutaminyl-tRNA(Gln) + AMP + diphosphate. In Sodalis glossinidius (strain morsitans), this protein is Glutamine--tRNA ligase.